A 150-amino-acid chain; its full sequence is 3-hydroxyacyl-[acyl-carrier-protein] dehydratase FabZ (150 aa).

The active site involves His57.

It belongs to the thioester dehydratase family. FabZ subfamily.

The protein resides in the cytoplasm. The catalysed reaction is a (3R)-hydroxyacyl-[ACP] = a (2E)-enoyl-[ACP] + H2O. In terms of biological role, involved in unsaturated fatty acids biosynthesis. Catalyzes the dehydration of short chain beta-hydroxyacyl-ACPs and long chain saturated and unsaturated beta-hydroxyacyl-ACPs. This is 3-hydroxyacyl-[acyl-carrier-protein] dehydratase FabZ from Mannheimia succiniciproducens (strain KCTC 0769BP / MBEL55E).